The sequence spans 154 residues: Regulatory protein RecX (154 aa).

It belongs to the RecX family.

The protein resides in the cytoplasm. Modulates RecA activity. This is Regulatory protein RecX from Trichlorobacter lovleyi (strain ATCC BAA-1151 / DSM 17278 / SZ) (Geobacter lovleyi).